A 193-amino-acid chain; its full sequence is Chaperone protein TorD (193 aa).

This sequence belongs to the TorD/DmsD family. TorD subfamily.

It localises to the cytoplasm. Its function is as follows. Involved in the biogenesis of TorA. Acts on TorA before the insertion of the molybdenum cofactor and, as a result, probably favors a conformation of the apoenzyme that is competent for acquiring the cofactor. The chain is Chaperone protein TorD from Histophilus somni (strain 129Pt) (Haemophilus somnus).